We begin with the raw amino-acid sequence, 514 residues long: 5'-AMP-activated protein kinase subunit gamma-3 (514 aa).

Disordered regions lie at residues methionine 1 to alanine 121 and aspartate 134 to asparagine 155. Polar residues predominate over residues serine 59–serine 71. 3 CBS domains span residues methionine 222–leucine 283, cysteine 305–leucine 363, and threonine 380–methionine 440. ADP-binding positions include arginine 250, methionine 265 to aspartate 270, valine 310, histidine 331 to arginine 332, and lysine 350. AMP contacts are provided by residues arginine 250, methionine 265–aspartate 270, valine 310, histidine 331, histidine 331–arginine 332, lysine 350, threonine 380, alanine 385, serine 406–alanine 407, serine 422–aspartate 425, arginine 449, leucine 457, histidine 478, histidine 478–arginine 479, and serine 494–aspartate 497. Residues arginine 250, methionine 265–aspartate 270, valine 310, histidine 331–arginine 332, arginine 332, and lysine 350 each bind ATP. The AMPK pseudosubstrate motif lies at leucine 318–valine 339. ADP contacts are provided by residues serine 422–aspartate 425, arginine 449, leucine 457, and histidine 478–arginine 479. Residues serine 422–aspartate 425, arginine 449, leucine 457, and histidine 478–arginine 479 each bind ATP. A CBS 4 domain is found at cysteine 452–alanine 511.

It belongs to the 5'-AMP-activated protein kinase gamma subunit family. In terms of assembly, AMPK is a heterotrimer of an alpha catalytic subunit (PRKAA1 or PRKAA2), a beta (PRKAB1 or PRKAB2) and a gamma non-catalytic subunits (PRKAG1, PRKAG2 or PRKAG3). Interacts with FNIP1 and FNIP2. Phosphorylated by ULK1; leading to negatively regulate AMPK activity and suggesting the existence of a regulatory feedback loop between ULK1 and AMPK. Post-translationally, glycosylated; O-GlcNAcylated by OGT, promoting the AMP-activated protein kinase (AMPK) activity. As to expression, muscle.

AMP/ATP-binding subunit of AMP-activated protein kinase (AMPK), an energy sensor protein kinase that plays a key role in regulating cellular energy metabolism. In response to reduction of intracellular ATP levels, AMPK activates energy-producing pathways and inhibits energy-consuming processes: inhibits protein, carbohydrate and lipid biosynthesis, as well as cell growth and proliferation. AMPK acts via direct phosphorylation of metabolic enzymes, and by longer-term effects via phosphorylation of transcription regulators. AMPK also acts as a regulator of cellular polarity by remodeling the actin cytoskeleton; probably by indirectly activating myosin. The AMPK gamma3 subunit is a non-catalytic subunit with a regulatory role in muscle energy metabolism. It mediates binding to AMP, ADP and ATP, leading to AMPK activation or inhibition: AMP-binding results in allosteric activation of alpha catalytic subunit (PRKAA1 or PRKAA2) both by inducing phosphorylation and preventing dephosphorylation of catalytic subunits. ADP also stimulates phosphorylation, without stimulating already phosphorylated catalytic subunit. ATP promotes dephosphorylation of catalytic subunit, rendering the AMPK enzyme inactive. This chain is 5'-AMP-activated protein kinase subunit gamma-3 (PRKAG3), found in Sus scrofa (Pig).